Consider the following 165-residue polypeptide: Protoporphyrinogen IX oxidase (165 aa).

4 consecutive transmembrane segments (helical) span residues 26–46 (LHVI…RLFV), 77–97 (AMIA…IVDW), 99–119 (MLWP…HMWL), and 145–165 (PTLL…YWGF). H27 serves as a coordination point for heme. Heme is bound at residue K105.

The protein belongs to the HemJ family. In terms of assembly, homodimer. Requires heme b as cofactor.

It localises to the cell membrane. The catalysed reaction is protoporphyrinogen IX + 3 A = protoporphyrin IX + 3 AH2. It participates in porphyrin-containing compound metabolism; protoporphyrin-IX biosynthesis; protoporphyrin-IX from protoporphyrinogen-IX: step 1/1. Functionally, catalyzes the oxidation of protoporphyrinogen IX to protoporphyrin IX. Is involved in the biosynthesis of tetrapyrrole molecules like heme and chlorophyll. Does not use oxygen or artificial electron acceptors such as menadione or benzoquinone. The sequence is that of Protoporphyrinogen IX oxidase from Cereibacter sphaeroides (strain ATCC 17023 / DSM 158 / JCM 6121 / CCUG 31486 / LMG 2827 / NBRC 12203 / NCIMB 8253 / ATH 2.4.1.) (Rhodobacter sphaeroides).